Consider the following 483-residue polypeptide: Sodium/pantothenate symporter (483 aa).

Topologically, residues 1–2 are periplasmic; that stretch reads MQ. Residues 3–23 form a helical membrane-spanning segment; sequence LEVILPLVAYLVVVFGISVYA. Residues 24-42 are Cytoplasmic-facing; sequence MRKRSTGTFLNEYFLGSRS. Residues 43–63 form a helical membrane-spanning segment; the sequence is MGGIVLAMTLTATYISASSFI. Residues 64 to 73 are Periplasmic-facing; that stretch reads GGPGAAYKYG. A helical transmembrane segment spans residues 74–94; it reads LGWVLLAMIQLPAVWLSLGIL. Residues 95-123 lie on the Cytoplasmic side of the membrane; sequence GKKFAILARRYNAVTLNDMLFARYQSRLL. The chain crosses the membrane as a helical span at residues 124 to 144; the sequence is VWLASLSLLVAFVGAMTVQFI. Over 145-157 the chain is Periplasmic; the sequence is GGARLLETAAGIP. The helical transmembrane segment at 158–178 threads the bilayer; that stretch reads YETGLLIFGISIALYTAFGGF. Topologically, residues 179–189 are cytoplasmic; the sequence is RASVLNDTMQG. Residues 190–210 traverse the membrane as a helical segment; that stretch reads LVMLIGTVVLLIGVVHAAGGL. Over 211 to 232 the chain is Periplasmic; the sequence is SNAVQTLQTIDPQLVTPQGADD. Residues 233–253 traverse the membrane as a helical segment; that stretch reads ILSPAFMTSFWVLVCFGVIGL. The Cytoplasmic segment spans residues 254–272; sequence PHTAVRCISYKDSKAVHRG. Residues 273 to 293 traverse the membrane as a helical segment; that stretch reads IIIGTIVVAILMFGMHLAGAL. Residues 294-305 lie on the Periplasmic side of the membrane; that stretch reads GRAVIPDLTVPD. A helical transmembrane segment spans residues 306-326; it reads LVIPTLMVKVLPPFAAGIFLA. The Cytoplasmic portion of the chain corresponds to 327–368; the sequence is APMAAIMSTINAQLLQSSATIIKDLYLNIRPDQMQNETRLKR. The chain crosses the membrane as a helical span at residues 369-389; sequence MSAVITLVLGALLLLAAWKPP. Residues 390 to 391 lie on the Periplasmic side of the membrane; it reads EM. A helical transmembrane segment spans residues 392 to 412; the sequence is IIWLNLLAFGGLEAVFLWPLV. The Cytoplasmic portion of the chain corresponds to 413–423; that stretch reads LGLYWERANAK. Residues 424-444 form a helical membrane-spanning segment; it reads GALSAMIVGGVLYAVLATLNI. A topological domain (periplasmic) is located at residue Gln445. Residues 446–466 form a helical membrane-spanning segment; the sequence is YLGFHPIVPSLLLSLLAFLVG. At 467–483 the chain is on the cytoplasmic side; that stretch reads NRFGTSVPQATVLTTDK.

The protein belongs to the sodium:solute symporter (SSF) (TC 2.A.21) family.

It localises to the cell inner membrane. It carries out the reaction (R)-pantothenate(in) + Na(+)(in) = (R)-pantothenate(out) + Na(+)(out). With respect to regulation, pantothenate uptake is not reduced in osmotically shocked cells or by ATP depletion with arsenate, but is reduced greater than 90% by the dissipation of the membrane electrochemical gradient with 2,4-dinitrophenol. In terms of biological role, catalyzes the sodium-dependent uptake of extracellular pantothenate. This Escherichia coli (strain K12) protein is Sodium/pantothenate symporter.